Here is a 324-residue protein sequence, read N- to C-terminus: NADH-ubiquinone oxidoreductase chain 1 (324 aa).

Helical transmembrane passes span Ile9–Leu29, Pro43–Ile63, Phe75–Met95, Leu106–Gly126, Ile146–Phe166, Ser177–Ala197, Ile237–Phe257, Glu259–Val279, and Phe299–Gly319.

It belongs to the complex I subunit 1 family.

The protein resides in the mitochondrion inner membrane. The catalysed reaction is a ubiquinone + NADH + 5 H(+)(in) = a ubiquinol + NAD(+) + 4 H(+)(out). Functionally, core subunit of the mitochondrial membrane respiratory chain NADH dehydrogenase (Complex I) that is believed to belong to the minimal assembly required for catalysis. Complex I functions in the transfer of electrons from NADH to the respiratory chain. The immediate electron acceptor for the enzyme is believed to be ubiquinone. This chain is NADH-ubiquinone oxidoreductase chain 1 (MT-ND1), found in Salmo salar (Atlantic salmon).